We begin with the raw amino-acid sequence, 297 residues long: ATP synthase gamma chain (297 aa).

It belongs to the ATPase gamma chain family. As to quaternary structure, F-type ATPases have 2 components, CF(1) - the catalytic core - and CF(0) - the membrane proton channel. CF(1) has five subunits: alpha(3), beta(3), gamma(1), delta(1), epsilon(1). CF(0) has three main subunits: a, b and c.

It is found in the cell membrane. Its function is as follows. Produces ATP from ADP in the presence of a proton gradient across the membrane. The gamma chain is believed to be important in regulating ATPase activity and the flow of protons through the CF(0) complex. The chain is ATP synthase gamma chain from Beutenbergia cavernae (strain ATCC BAA-8 / DSM 12333 / CCUG 43141 / JCM 11478 / NBRC 16432 / NCIMB 13614 / HKI 0122).